The primary structure comprises 433 residues: Glutamate-rich protein 2 (433 aa).

Disordered stretches follow at residues 56–86, 113–161, 189–273, 308–344, and 394–433; these read VPAA…LAPP, DSAS…KHPQ, SRQN…SIET, CLED…TRAP, and EKAQ…EDGS. A compositionally biased stretch (pro residues) spans 63–85; the sequence is PAPPPPRALRPAPGPPRSAPLAP. Positions 114-127 are enriched in polar residues; sequence SASQARGSEPSSSA. Composition is skewed to basic and acidic residues over residues 199–214 and 244–258; these read DPKE…EKPQ and ARKE…DKVS. The span at 259–273 shows a compositional bias: polar residues; sequence LKSSENRPSSRSIET. 2 stretches are compositionally biased toward acidic residues: residues 308–334 and 397–433; these read CLED…EDDE and QEEE…EDGS.

The protein is Glutamate-rich protein 2 (Erich2) of Rattus norvegicus (Rat).